Here is a 143-residue protein sequence, read N- to C-terminus: Nucleoside diphosphate kinase (143 aa).

An NDPK-like domain is found at 1-132 (MVKPDGVQRG…LWFSPQELCQ (132 aa)). ADP is bound by residues Lys3, Phe51, Arg79, Thr85, Arg96, Val103, and Asn106. Residues Lys3, Phe51, Arg79, Thr85, and Arg96 each coordinate ATP. Asn106 contacts ATP. His109 acts as the Pros-phosphohistidine intermediate in catalysis.

The protein belongs to the NDK family. In terms of assembly, homohexamer. Mg(2+) serves as cofactor.

The catalysed reaction is a 2'-deoxyribonucleoside 5'-diphosphate + ATP = a 2'-deoxyribonucleoside 5'-triphosphate + ADP. It carries out the reaction a ribonucleoside 5'-diphosphate + ATP = a ribonucleoside 5'-triphosphate + ADP. The enzyme catalyses GDP + ATP = GTP + ADP. It participates in purine metabolism; purine nucleotide biosynthesis. Its function is as follows. Major role in the synthesis of nucleoside triphosphates other than ATP. The ATP gamma phosphate is transferred to the NDP beta phosphate via a ping-pong mechanism, using a phosphorylated active-site intermediate. The protein is Nucleoside diphosphate kinase of Schistosoma mansoni (Blood fluke).